The primary structure comprises 120 residues: BolA-like protein 2 (120 aa).

Belongs to the BolA/IbaG family. As to quaternary structure, interacts with FRA1, GRX3 and GRX4.

The protein resides in the cytoplasm. The protein localises to the nucleus. Involved in the regulation of the iron regulon in response to decreased mitochondrial iron-sulfur cluster synthesis. May be involved in mitochondrial organization and biogenesis. This chain is BolA-like protein 2 (BOL2), found in Saccharomyces cerevisiae (strain ATCC 204508 / S288c) (Baker's yeast).